Reading from the N-terminus, the 156-residue chain is Ribosomal RNA large subunit methyltransferase H (156 aa).

S-adenosyl-L-methionine contacts are provided by residues Leu73, Gly104, and 123 to 128 (LSPLTL).

It belongs to the RNA methyltransferase RlmH family. As to quaternary structure, homodimer.

Its subcellular location is the cytoplasm. It catalyses the reaction pseudouridine(1915) in 23S rRNA + S-adenosyl-L-methionine = N(3)-methylpseudouridine(1915) in 23S rRNA + S-adenosyl-L-homocysteine + H(+). Specifically methylates the pseudouridine at position 1915 (m3Psi1915) in 23S rRNA. The sequence is that of Ribosomal RNA large subunit methyltransferase H from Sodalis glossinidius (strain morsitans).